We begin with the raw amino-acid sequence, 160 residues long: Ribosomal RNA large subunit methyltransferase H (160 aa).

S-adenosyl-L-methionine contacts are provided by residues Leu76, Gly108, and 127-132 (LGKMTW).

Belongs to the RNA methyltransferase RlmH family. In terms of assembly, homodimer.

Its subcellular location is the cytoplasm. The catalysed reaction is pseudouridine(1915) in 23S rRNA + S-adenosyl-L-methionine = N(3)-methylpseudouridine(1915) in 23S rRNA + S-adenosyl-L-homocysteine + H(+). Functionally, specifically methylates the pseudouridine at position 1915 (m3Psi1915) in 23S rRNA. The sequence is that of Ribosomal RNA large subunit methyltransferase H from Rhizobium etli (strain CIAT 652).